The following is a 201-amino-acid chain: Retinol-binding protein 4 (201 aa).

The first 18 residues, 1-18 (MEWVWALVLLAALGGGSA), serve as a signal peptide directing secretion. 3 disulfides stabilise this stretch: cysteine 22-cysteine 178, cysteine 88-cysteine 192, and cysteine 138-cysteine 147. Glutamine 116 lines the substrate pocket. Arginine 139 is modified (omega-N-methylarginine).

This sequence belongs to the calycin superfamily. Lipocalin family. As to quaternary structure, interacts with TTR. Interaction with TTR prevents its loss by filtration through the kidney glomeruli. Interacts with STRA6.

It is found in the secreted. In terms of biological role, retinol-binding protein that mediates retinol transport in blood plasma. Delivers retinol from the liver stores to the peripheral tissues. Transfers the bound all-trans retinol to STRA6, that then facilitates retinol transport across the cell membrane. In Mus musculus (Mouse), this protein is Retinol-binding protein 4 (Rbp4).